Here is a 361-residue protein sequence, read N- to C-terminus: Homocitrate synthase (361 aa).

Positions 1–251 (MVLDSTLREG…KYRLDLLYRV (251 aa)) constitute a Pyruvate carboxyltransferase domain. R8 contributes to the 2-oxoglutarate binding site. E9 serves as a coordination point for Mg(2+). Residues H68, R128, and T162 each coordinate 2-oxoglutarate. Mg(2+)-binding residues include H188 and H190. H282 acts as the Proton acceptor in catalysis.

Belongs to the alpha-IPM synthase/homocitrate synthase family. Homocitrate synthase LYS20/LYS21 subfamily. The cofactor is Mg(2+). Mn(2+) is required as a cofactor.

The catalysed reaction is acetyl-CoA + 2-oxoglutarate + H2O = (2R)-homocitrate + CoA + H(+). Its pathway is amino-acid biosynthesis; L-lysine biosynthesis via AAA pathway; L-alpha-aminoadipate from 2-oxoglutarate: step 1/5. Functionally, catalyzes the aldol-type condensation of 2-oxoglutarate with acetyl-CoA to yield homocitrate. Carries out the first step of the alpha-aminoadipate (AAA) lysine biosynthesis pathway. This Pyrococcus abyssi (strain GE5 / Orsay) protein is Homocitrate synthase.